A 141-amino-acid polypeptide reads, in one-letter code: Nucleoside diphosphate kinase (141 aa).

6 residues coordinate ATP: Lys9, Phe57, Arg85, Thr91, Arg102, and Asn112. The active-site Pros-phosphohistidine intermediate is His115.

It belongs to the NDK family. Homotetramer. Requires Mg(2+) as cofactor.

The protein resides in the cytoplasm. It carries out the reaction a 2'-deoxyribonucleoside 5'-diphosphate + ATP = a 2'-deoxyribonucleoside 5'-triphosphate + ADP. The catalysed reaction is a ribonucleoside 5'-diphosphate + ATP = a ribonucleoside 5'-triphosphate + ADP. In terms of biological role, major role in the synthesis of nucleoside triphosphates other than ATP. The ATP gamma phosphate is transferred to the NDP beta phosphate via a ping-pong mechanism, using a phosphorylated active-site intermediate. This chain is Nucleoside diphosphate kinase, found in Chlamydia muridarum (strain MoPn / Nigg).